A 140-amino-acid polypeptide reads, in one-letter code: Hemoglobin subunit beta (140 aa).

The Globin domain occupies Gly-1–His-140. Heme b-binding residues include His-57 and His-86.

It belongs to the globin family. As to quaternary structure, heterotetramer of two alpha chains and two beta chains. Red blood cells.

Functionally, involved in oxygen transport from the lung to the various peripheral tissues. The protein is Hemoglobin subunit beta (HBB) of Pelophylax lessonae (Pool frog).